A 598-amino-acid chain; its full sequence is Nuclear receptor subfamily 4 group A member 1 (598 aa).

Disordered stretches follow at residues 1-43 (MPCI…PEAA) and 128-151 (GSDYYGSPCSAPSPSTPSFQPPQL). The segment covering 134–145 (SPCSAPSPSTPS) has biased composition (low complexity). The segment at 171–466 (RAWTEQLPKA…PAEGKLIFCS (296 aa)) is required for nuclear import. The segment at residues 264 to 339 (EGRCAVCGDN…VGMVKEVVRT (76 aa)) is a DNA-binding region (nuclear receptor). NR C4-type zinc fingers lie at residues 267 to 287 (CAVCGDNASCQHYGVRTCEGC) and 303 to 327 (CLANKDCPVDKRRRNRCQFCRFQKC). Residues 268–354 (AVCGDNASCQ…RRGRLPSKPK (87 aa)) form a required for binding NBRE-containing DNA region. A required for the interaction with RXRA region spans residues 299–361 (AKYICLANKD…KPKQPPETSP (63 aa)). A Phosphoserine; by PKA modification is found at Ser-341. The interval 341–361 (SLKGRRGRLPSKPKQPPETSP) is disordered. A Phosphoserine; by PKA, RPS6KA1 and RPS6KA3 modification is found at Ser-351. The region spanning 360–595 (SPAHLLTSLV…PIVDKIFMDT (236 aa)) is the NR LBD domain. Positions 521–544 (PRRVEELQNRIASCLKEHVSAEAG) are binds lipopolysaccharide. The tract at residues 584-595 (PPPIVDKIFMDT) is AF-2.

This sequence belongs to the nuclear hormone receptor family. NR4 subfamily. As to quaternary structure, binds the NGFI-B response element (NBRE) as a monomer. Binds the Nur response element (NurRE), consisting of two inverse NBRE-related octanucleotide repeats separated by 6 base-pairs, as a dimer. Interacts (via N-terminus) with NLRP3 (via LRR repeat domain); the interaction is direct, requires binding of NR4A1/Nur77 to NBRE-containing dsDNA and lipopolysaccharide, and leads to non-canonical NLRP3 inflammasome activation. Interacts with GADD45GIP1. Interacts with STK11. Interacts with IFI27. Heterodimer (via DNA-binding domain) with RXRA (via C-terminus); DNA-binding of the heterodimer is enhanced by 9-cis retinoic acid. Competes for the RXRA interaction with EP300 and thereby attenuates EP300 mediated acetylation of RXRA. Interacts with NCOA1. Interacts with NCOA2. Interacts with NCOA3. The cofactor is Zn(2+). Phosphorylated at Ser-351 by RPS6KA1 and RPS6KA3 in response to mitogenic or stress stimuli. Post-translationally, acetylated by p300/CBP, acetylation increases stability. Deacetylated by HDAC1.

It is found in the nucleus. Its subcellular location is the cytoplasm. The protein resides in the cytosol. It localises to the mitochondrion. Functionally, orphan nuclear receptor. Binds the NGFI-B response element (NBRE) 5'-AAAGGTCA-3'. Binds 9-cis-retinoic acid outside of its ligand-binding (NR LBD) domain. Participates in energy homeostasis by sequestrating the kinase STK11 in the nucleus, thereby attenuating cytoplasmic AMPK activation. Regulates the inflammatory response in macrophages by regulating metabolic adaptations during inflammation, including repressing the transcription of genes involved in the citric acid cycle (TCA). Inhibits NF-kappa-B signaling by binding to low-affinity NF-kappa-B binding sites, such as at the IL2 promoter. May act concomitantly with NR4A2 in regulating the expression of delayed-early genes during liver regeneration. Plays a role in the vascular response to injury. In terms of biological role, in the cytosol, upon its detection of both bacterial lipopolysaccharide (LPS) and NBRE-containing mitochondrial DNA released by GSDMD pores during pyroptosis, it promotes non-canonical NLRP3 inflammasome activation by stimulating association of NLRP3 and NEK7. This is Nuclear receptor subfamily 4 group A member 1 (NR4A1) from Bos taurus (Bovine).